The primary structure comprises 527 residues: Gustatory receptor for bitter taste 66a (527 aa).

Residues 1-46 (MAQAEDAVQPLLQQFQQLFFISKIAGILPQDLEKFRSRNLLEKSRN) are Cytoplasmic-facing. Residues 47–67 (GMIYMLSTLILYVVLYNILIY) form a helical membrane-spanning segment. The Extracellular segment spans residues 68–80 (SFGEEDRSLKASQ). Residues 81 to 101 (STLTFVIGLFLTYIGLIMMVS) traverse the membrane as a helical segment. The Cytoplasmic segment spans residues 102 to 144 (DQLTALRNQGRIGELYERIRLVDERLYKEGCVMDNSTIGRRIR). A helical membrane pass occupies residues 145 to 165 (IMLIMTVIFELSILVSTYVKL). Topologically, residues 166-174 (VDYSQWMSL) are extracellular. Residues 175–195 (LWIVSAIPTFINTLDKIWFAV) traverse the membrane as a helical segment. Over 196-345 (SLYALKERFE…KALNELWSYP (150 aa)) the chain is Cytoplasmic. Residues 346 to 366 (ILSLMAYGFLIFTAQLYFLYC) form a helical membrane-spanning segment. The Extracellular portion of the chain corresponds to 367–382 (ATQYQSIPSLFRSAKN). A helical transmembrane segment spans residues 383–403 (PFITVIVLSYTSGKCVYLIYL). Topologically, residues 404–460 (SWKTSQASKRTGISLHKCGVVADDNLLYEIVNHLSLKLLNHSVDFSACGFFTLDMET) are cytoplasmic. Residues 461–481 (LYGVSGGITSYLIILIQFNLA) traverse the membrane as a helical segment. Residues 482–527 (AQQAKEAIQTFNSLNDTAGLVGAATDMDNISSTLRDFVTTTMTPAV) are Extracellular-facing. 2 N-linked (GlcNAc...) asparagine glycosylation sites follow: Asn496 and Asn510.

The protein belongs to the insect chemoreceptor superfamily. Gustatory receptor (GR) family. Gr66a subfamily. In terms of tissue distribution, taste hairs in labial palps, labral and cibarial sense organs and forelegs. In larvae, is expressed in neurons of the terminal external chemosensory organ, as well as in the dorsal, ventral, and posterior pharyngeal sense organs.

The protein resides in the cell membrane. Functionally, gustatory receptor required for response to the bitter in taste neurons. Gr66a cells respond to bitter compounds such as caffeine, theophylline, threonine or valine. Flies avoid bitter substances, suggesting that Gr66a neuron activity is sufficient to mediate avoidance behavior. Required for sensing and avoiding N,N-Diethyl-meta-toluamide (DEET), the most widely used insect repellent worldwide, as well as to L-canavanine, a plant-derived insecticide. Gr66a neurons are also involved in the sex-specific perception of molecules inducing male avoidance behavior, probably through sensing 7-tricosene (7-T), a male cuticular pheromone and leading to inhibition of male-male courtship. Finally, also plays a role in oviposition behavior, in which females evaluate their environment and choose to lay eggs on substrates they may find aversive in other contexts. In Drosophila melanogaster (Fruit fly), this protein is Gustatory receptor for bitter taste 66a (Gr66a).